The sequence spans 270 residues: Interleukin-1 alpha (270 aa).

Residues 1–112 (MAKVPDLFED…DTEEEIIKPR (112 aa)) constitute a propeptide that is removed on maturation. Lysine 82 carries the N6-acetyllysine modification. Positions 82–86 (KKRRL) are nuclear localization signal (NLS). Serine 87 is modified (phosphoserine). Residues asparagine 102 and asparagine 141 are each glycosylated (N-linked (GlcNAc...) asparagine).

Belongs to the IL-1 family. As to quaternary structure, monomer. Interacts with TMED10; the interaction mediates the translocation from the cytoplasm into the ERGIC (endoplasmic reticulum-Golgi intermediate compartment) and thereby secretion. Interacts with IL1R1. Interacts with S100A13; this interaction is the first step in the export of IL1A, followed by direct translocation of this complex across the plasma membrane. Post-translationally, acetylated within its nuclear localization sequence, which impacts subcellular localization. In terms of processing, proteolytic processed by CAPN1 in a calcium-dependent manner. Cleavage from 31 kDa precursor to 18 kDa biologically active molecules. Phosphorylated. Phosphorylation greatly enhances susceptibility to digestion and promotes the conversion of pre-IL1A alpha to the biologically active IL1A.

Its subcellular location is the nucleus. It localises to the cytoplasm. The protein localises to the secreted. Cytokine constitutively present intracellularly in nearly all resting non-hematopoietic cells that plays an important role in inflammation and bridges the innate and adaptive immune systems. After binding to its receptor IL1R1 together with its accessory protein IL1RAP, forms the high affinity interleukin-1 receptor complex. Signaling involves the recruitment of adapter molecules such as MYD88, IRAK1 or IRAK4. In turn, mediates the activation of NF-kappa-B and the three MAPK pathways p38, p42/p44 and JNK pathways. Within the cell, acts as an alarmin and cell death results in its liberation in the extracellular space after disruption of the cell membrane to induce inflammation and alert the host to injury or damage. In addition to its role as a danger signal, which occurs when the cytokine is passively released by cell necrosis, directly senses DNA damage and acts as signal for genotoxic stress without loss of cell integrity. The protein is Interleukin-1 alpha (IL1A) of Sus scrofa (Pig).